Consider the following 312-residue polypeptide: Malate dehydrogenase (312 aa).

Residues 7–13 (GAAGGIG) and D34 each bind NAD(+). Residues R81 and R87 each contribute to the substrate site. NAD(+) is bound by residues N94 and 117–119 (ITN). N119 and R153 together coordinate substrate. H177 (proton acceptor) is an active-site residue. M227 contributes to the NAD(+) binding site.

Belongs to the LDH/MDH superfamily. MDH type 1 family. In terms of assembly, homodimer.

It carries out the reaction (S)-malate + NAD(+) = oxaloacetate + NADH + H(+). In terms of biological role, catalyzes the reversible oxidation of malate to oxaloacetate. The polypeptide is Malate dehydrogenase (Shigella flexneri serotype 5b (strain 8401)).